The following is a 183-amino-acid chain: MSNPQEELLPPSAEDDELTLPRASINKIIKELVPTVRVANESRELILNCCSEFIHLISSEANEVCNMRNKKTINAEHVLEALERLGFHDYKQEAEAVLHDCKEVAAKRRRQSTRLENLGIPEEELLRQQQELFAKAREEQAREEQQQWMSMQAAAMVQRPPLADGSVASKPSEDDDDDDDDDY.

Residues 19–82 (TLPRASINKI…INAEHVLEAL (64 aa)) enclose the Histone-fold domain. Positions 92 to 183 (QEAEAVLHDC…DDDDDDDDDY (92 aa)) are repression of TATA-containing promoters. The disordered stretch occupies residues 155-183 (AMVQRPPLADGSVASKPSEDDDDDDDDDY). Residues 173-183 (EDDDDDDDDDY) are compositionally biased toward acidic residues.

Belongs to the NC2 beta/DR1 family. In terms of assembly, component of the Ada2a-containing (ATAC) complex composed of at least Ada2a, Atac1, Hcf, Ada3, Gcn5, Mocs2B, Charac-14, Atac3, Atac2, NC2beta and wds. Homodimer. Interacts with NC2-alpha/Drap1 to form the dNC2 complex.

It localises to the nucleus. Its function is as follows. Bifunctional basic transcription factor. Activates transcription of DPE (Downstream Promoter Element) containing promoters while repressing transcription of promoters which contain TATA elements. Together with Chrac-14, promotes nucleosome sliding of ATP-dependent nucleosome remodeling complexes. The chain is Protein Dr1 (NC2beta) from Drosophila melanogaster (Fruit fly).